Reading from the N-terminus, the 484-residue chain is ATP synthase subunit beta (484 aa).

Residues 104-123 (ERGPIGSKQTMPIHADAPPF) are disordered. 156–163 (GGAGVGKT) lines the ATP pocket.

Belongs to the ATPase alpha/beta chains family. F-type ATPases have 2 components, CF(1) - the catalytic core - and CF(0) - the membrane proton channel. CF(1) has five subunits: alpha(3), beta(3), gamma(1), delta(1), epsilon(1). CF(0) has three main subunits: a(1), b(2) and c(9-12). The alpha and beta chains form an alternating ring which encloses part of the gamma chain. CF(1) is attached to CF(0) by a central stalk formed by the gamma and epsilon chains, while a peripheral stalk is formed by the delta and b chains.

It is found in the cell inner membrane. It catalyses the reaction ATP + H2O + 4 H(+)(in) = ADP + phosphate + 5 H(+)(out). Functionally, produces ATP from ADP in the presence of a proton gradient across the membrane. The catalytic sites are hosted primarily by the beta subunits. The sequence is that of ATP synthase subunit beta from Zymomonas mobilis subsp. mobilis (strain ATCC 31821 / ZM4 / CP4).